Reading from the N-terminus, the 245-residue chain is 1-(5-phosphoribosyl)-5-[(5-phosphoribosylamino)methylideneamino] imidazole-4-carboxamide isomerase (245 aa).

D7 functions as the Proton acceptor in the catalytic mechanism. D129 serves as the catalytic Proton donor.

It belongs to the HisA/HisF family.

Its subcellular location is the cytoplasm. The catalysed reaction is 1-(5-phospho-beta-D-ribosyl)-5-[(5-phospho-beta-D-ribosylamino)methylideneamino]imidazole-4-carboxamide = 5-[(5-phospho-1-deoxy-D-ribulos-1-ylimino)methylamino]-1-(5-phospho-beta-D-ribosyl)imidazole-4-carboxamide. It participates in amino-acid biosynthesis; L-histidine biosynthesis; L-histidine from 5-phospho-alpha-D-ribose 1-diphosphate: step 4/9. The protein is 1-(5-phosphoribosyl)-5-[(5-phosphoribosylamino)methylideneamino] imidazole-4-carboxamide isomerase of Shewanella baltica (strain OS195).